Reading from the N-terminus, the 472-residue chain is Na(+)/H(+) antiporter NhaA 1 (472 aa).

A run of 11 helical transmembrane segments spans residues 34 to 54, 86 to 106, 116 to 136, 146 to 166, 175 to 195, 203 to 223, 227 to 247, 324 to 344, 353 to 373, 394 to 414, and 428 to 448; these read TASI…NSQW, GLMV…CLVG, LVIA…AGVA, GWGI…ALLG, VTLS…IGLF, TSLM…VLGF, IFYL…GVHA, PVSL…ALPD, VVFI…ISVF, VFAL…IASL, and LGIL…FLMI.

Belongs to the NhaA Na(+)/H(+) (TC 2.A.33) antiporter family.

Its subcellular location is the cell inner membrane. It carries out the reaction Na(+)(in) + 2 H(+)(out) = Na(+)(out) + 2 H(+)(in). Na(+)/H(+) antiporter that extrudes sodium in exchange for external protons. The polypeptide is Na(+)/H(+) antiporter NhaA 1 (Pseudoalteromonas atlantica (strain T6c / ATCC BAA-1087)).